Reading from the N-terminus, the 543-residue chain is tRNA (guanine(37)-N(1))-methyltransferase (543 aa).

Residues 1 to 59 constitute a mitochondrion transit peptide; that stretch reads MLKSLCFVIRPAIVSRPQFRLPTIARLSLRQFQNQPQSVGFFTMAPLETRALALSPSAT. S-adenosyl-L-methionine is bound by residues H282, 320-321, and 348-349; these read DL and DG. The segment at 366–405 is disordered; it reads DPAPPPKVSNRQRDREAKEARRKREQAKAAGQPVTETAPM. An S-adenosyl-L-methionine-binding site is contributed by N431.

The protein belongs to the class I-like SAM-binding methyltransferase superfamily. TRM5/TYW2 family. As to quaternary structure, monomer.

The protein localises to the mitochondrion matrix. Its subcellular location is the nucleus. It is found in the cytoplasm. It carries out the reaction guanosine(37) in tRNA + S-adenosyl-L-methionine = N(1)-methylguanosine(37) in tRNA + S-adenosyl-L-homocysteine + H(+). Functionally, specifically methylates the N1 position of guanosine-37 in various cytoplasmic and mitochondrial tRNAs. Methylation is not dependent on the nature of the nucleoside 5' of the target nucleoside. This is the first step in the biosynthesis of wybutosine (yW), a modified base adjacent to the anticodon of tRNAs and required for accurate decoding. This chain is tRNA (guanine(37)-N(1))-methyltransferase, found in Cryptococcus neoformans var. neoformans serotype D (strain JEC21 / ATCC MYA-565) (Filobasidiella neoformans).